Here is a 668-residue protein sequence, read N- to C-terminus: Calpain-13 (668 aa).

Residues 34 to 331 form the Calpain catalytic domain; the sequence is LFIDDTFPAE…FSCLYICSQF (298 aa). Residues Cys93, His249, and Asn273 contribute to the active site. 2 consecutive EF-hand domains span residues 537-572 and 635-668; these read FSLD…LIHC and IRLE…VMYS.

This sequence belongs to the peptidase C2 family.

Functionally, probable non-lysosomal thiol-protease. This Rattus norvegicus (Rat) protein is Calpain-13 (Capn13).